The chain runs to 339 residues: Holliday junction branch migration complex subunit RuvB (339 aa).

The large ATPase domain (RuvB-L) stretch occupies residues Met1–Tyr180. ATP is bound by residues Leu19, Arg20, Gly61, Lys64, Thr65, Thr66, Glu127 to Phe129, Arg170, Tyr180, and Arg217. Thr65 contacts Mg(2+). Positions Thr181 to Glu251 are small ATPAse domain (RuvB-S). A head domain (RuvB-H) region spans residues His254–Asp339. Arg309 and Arg314 together coordinate DNA.

Belongs to the RuvB family. Homohexamer. Forms an RuvA(8)-RuvB(12)-Holliday junction (HJ) complex. HJ DNA is sandwiched between 2 RuvA tetramers; dsDNA enters through RuvA and exits via RuvB. An RuvB hexamer assembles on each DNA strand where it exits the tetramer. Each RuvB hexamer is contacted by two RuvA subunits (via domain III) on 2 adjacent RuvB subunits; this complex drives branch migration. In the full resolvosome a probable DNA-RuvA(4)-RuvB(12)-RuvC(2) complex forms which resolves the HJ.

It localises to the cytoplasm. It catalyses the reaction ATP + H2O = ADP + phosphate + H(+). In terms of biological role, the RuvA-RuvB-RuvC complex processes Holliday junction (HJ) DNA during genetic recombination and DNA repair, while the RuvA-RuvB complex plays an important role in the rescue of blocked DNA replication forks via replication fork reversal (RFR). RuvA specifically binds to HJ cruciform DNA, conferring on it an open structure. The RuvB hexamer acts as an ATP-dependent pump, pulling dsDNA into and through the RuvAB complex. RuvB forms 2 homohexamers on either side of HJ DNA bound by 1 or 2 RuvA tetramers; 4 subunits per hexamer contact DNA at a time. Coordinated motions by a converter formed by DNA-disengaged RuvB subunits stimulates ATP hydrolysis and nucleotide exchange. Immobilization of the converter enables RuvB to convert the ATP-contained energy into a lever motion, pulling 2 nucleotides of DNA out of the RuvA tetramer per ATP hydrolyzed, thus driving DNA branch migration. The RuvB motors rotate together with the DNA substrate, which together with the progressing nucleotide cycle form the mechanistic basis for DNA recombination by continuous HJ branch migration. Branch migration allows RuvC to scan DNA until it finds its consensus sequence, where it cleaves and resolves cruciform DNA. The chain is Holliday junction branch migration complex subunit RuvB from Geotalea daltonii (strain DSM 22248 / JCM 15807 / FRC-32) (Geobacter daltonii).